The following is a 570-amino-acid chain: CRISPR-associated protein Cas8a1/Csx13 (570 aa).

2 disordered regions span residues 1-23 (MACM…AGLR) and 551-570 (GGEA…SEQS).

It belongs to the CRISPR-associated protein Cas8a1/Csx13 family. Myxan subtype subfamily.

Its function is as follows. CRISPR (clustered regularly interspaced short palindromic repeat) is an adaptive immune system that provides protection against mobile genetic elements (viruses, transposable elements and conjugative plasmids). CRISPR clusters contain spacers, sequences complementary to antecedent mobile elements, and target invading nucleic acids. CRISPR clusters are transcribed and processed into CRISPR RNA (crRNA). Functionally, functions in an unknown fashion to stimulate transcription of fruA independently of the intracellular A- and E-developmental signals. This chain is CRISPR-associated protein Cas8a1/Csx13 (devT), found in Myxococcus xanthus (strain DK1622).